Here is a 202-residue protein sequence, read N- to C-terminus: Heat shock 22 kDa protein, mitochondrial (202 aa).

The transit peptide at 1–31 (MASSLALKRFLSSGLLSSSFLRPVASSASRS) directs the protein to the mitochondrion. The sHSP domain maps to 94 to 202 (VLSAASRRGW…RNNVINVKVD (109 aa)).

It belongs to the small heat shock protein (HSP20) family.

It is found in the mitochondrion. In Pisum sativum (Garden pea), this protein is Heat shock 22 kDa protein, mitochondrial (HSP22).